The sequence spans 168 residues: Protein yop-1 (168 aa).

The Cytoplasmic segment spans residues methionine 1–proline 35. Residues lysine 36–leucine 55 form a helical membrane-spanning segment. Position 56 (glycine 56) is a topological domain, lumenal. A helical transmembrane segment spans residues glycine 57 to alanine 76. The Cytoplasmic portion of the chain corresponds to leucine 77–threonine 86. The chain crosses the membrane as a helical span at residues glutamine 87–serine 103. At leucine 104–isoleucine 105 the chain is on the lumenal side. The chain crosses the membrane as a helical span at residues serine 106–tryptophan 124. Topologically, residues leucine 125–aspartate 168 are cytoplasmic.

The protein belongs to the DP1 family. Oligomer.

It localises to the endoplasmic reticulum membrane. The protein localises to the golgi apparatus membrane. Functionally, required to generate and maintain the structure of the tubular endoplasmic reticulum network and the vacuole. Induces high curvature in membranes and causes membrane tubule formation. Involved in membrane/vesicle trafficking. The polypeptide is Protein yop-1 (yop-1) (Neurospora crassa (strain ATCC 24698 / 74-OR23-1A / CBS 708.71 / DSM 1257 / FGSC 987)).